We begin with the raw amino-acid sequence, 424 residues long: Probable ribonuclease FAU-1 (424 aa).

This sequence belongs to the FAU-1 family.

In terms of biological role, probable RNase involved in rRNA stability through maturation and/or degradation of precursor rRNAs. Binds to RNA in loop regions with AU-rich sequences. The protein is Probable ribonuclease FAU-1 of Saccharolobus islandicus (strain Y.G.57.14 / Yellowstone #1) (Sulfolobus islandicus).